We begin with the raw amino-acid sequence, 772 residues long: 5-methyltetrahydropteroyltriglutamate--homocysteine methyltransferase (772 aa).

5-methyltetrahydropteroyltri-L-glutamate-binding positions include 24-27 (RELK) and lysine 120. L-homocysteine-binding positions include 446–448 (IGS) and glutamate 499. Residues 446–448 (IGS) and glutamate 499 contribute to the L-methionine site. Tryptophan 576 lines the 5-methyltetrahydropteroyltri-L-glutamate pocket. An L-homocysteine-binding site is contributed by aspartate 614. Aspartate 614 contributes to the L-methionine binding site. Glutamate 620 contributes to the 5-methyltetrahydropteroyltri-L-glutamate binding site. Histidine 656, cysteine 658, and glutamate 680 together coordinate Zn(2+). Histidine 709 functions as the Proton donor in the catalytic mechanism. Cysteine 741 is a Zn(2+) binding site.

It belongs to the vitamin-B12 independent methionine synthase family. Zn(2+) is required as a cofactor.

It catalyses the reaction 5-methyltetrahydropteroyltri-L-glutamate + L-homocysteine = tetrahydropteroyltri-L-glutamate + L-methionine. Its pathway is amino-acid biosynthesis; L-methionine biosynthesis via de novo pathway; L-methionine from L-homocysteine (MetE route): step 1/1. Catalyzes the transfer of a methyl group from 5-methyltetrahydrofolate to homocysteine resulting in methionine formation. This Streptomyces coelicolor (strain ATCC BAA-471 / A3(2) / M145) protein is 5-methyltetrahydropteroyltriglutamate--homocysteine methyltransferase.